Here is a 463-residue protein sequence, read N- to C-terminus: Hexose-6-phosphate:phosphate antiporter (463 aa).

Topologically, residues 1–24 (MLAFLNQVRKPTLDLPLDVRRKMW) are cytoplasmic. Residues 25–45 (FKPFMQSYLVVFIGYLTMYLI) form a helical membrane-spanning segment. At 46–60 (RKNFNIAQNDMISTY) the chain is on the periplasmic side. A helical transmembrane segment spans residues 61–81 (GLSMTELGMIGLGFSITYGVG). Residues 82-96 (KTLVSYYADGKNTKQ) lie on the Cytoplasmic side of the membrane. Residues 97–117 (FLPFMLILSAICMLGFSASMG) traverse the membrane as a helical segment. The Periplasmic segment spans residues 118-122 (AGSTS). The chain crosses the membrane as a helical span at residues 123-143 (LFLMIAFYALSGFFQSTGGSC). Residues 144–159 (SYSTITKWTPRRKRGT) are Cytoplasmic-facing. Residues 160–180 (FLGFWNISHNLGGAGAAGVAL) traverse the membrane as a helical segment. The Periplasmic portion of the chain corresponds to 181–189 (FGANYLFDG). A helical membrane pass occupies residues 190–210 (HVIGMFIFPSIIALIVGFIGL). At 211–259 (RFGSDSPESYGLGKAEELFGEEISEEDKETEENEMTKWQIFVEYVLKNK) the chain is on the cytoplasmic side. The helical transmembrane segment at 260-280 (VIWLLCFSNIFLYVVRIGIDQ) threads the bilayer. The Periplasmic segment spans residues 281–297 (WSTVYAFQELKLSKEVA). The chain crosses the membrane as a helical span at residues 298–318 (IQGFTLFEVGALVGTLLWGWL). The Cytoplasmic segment spans residues 319–326 (SDLANGRR). Residues 327–347 (ALVACVALALIIATLGVYQHA) form a helical membrane-spanning segment. The Periplasmic portion of the chain corresponds to 348–357 (SNQYVYLASL). A helical membrane pass occupies residues 358-378 (FALGFLVFGPQLLIGVAAVGF). Over 379-382 (VPKK) the chain is Cytoplasmic. A helical transmembrane segment spans residues 383-403 (AIGAADGIKGTFAYLIGDSFA). Residues 404 to 425 (KLGLGMIADGTPVFGLTGWAGT) lie on the Periplasmic side of the membrane. Residues 426–446 (FAALDAAAIGCICLMAMVAVM) traverse the membrane as a helical segment. At 447-463 (EERKIRREKKIQQVNIA) the chain is on the cytoplasmic side.

Belongs to the major facilitator superfamily. Organophosphate:Pi antiporter (OPA) (TC 2.A.1.4) family.

It localises to the cell inner membrane. Functionally, mediates the exchange of external hexose 6-phosphate and internal inorganic phosphate. The protein is Hexose-6-phosphate:phosphate antiporter (uhpT) of Salmonella typhimurium (strain LT2 / SGSC1412 / ATCC 700720).